We begin with the raw amino-acid sequence, 420 residues long: Mannose-1-phosphate guanylyltransferase regulatory subunit alpha (420 aa).

The segment at 2 to 251 (LKAVILIGGP…DGIWSQIKSA (250 aa)) is substrate-binding domain. GDP-alpha-D-mannose is bound by residues Glu-85 and Gln-247. The tract at residues 273–420 (LAKHTPGGPR…SRSFTNQIIL (148 aa)) is hexapeptide repeat domain. A C-loop region spans residues 356-384 (TPNDPNPNDPRAHMDSESLFKDGKLLPAI).

The protein belongs to the transferase hexapeptide repeat family. Component of the GMPPA-GMPPB mannose-1-phosphate guanylyltransferase complex composed of 4 GMPPA subunits and 8 GMPPB subunits; the complex is organized into three layers, a central layer made up of 2 GMPPA dimers sandwiched between two layers each made up of 2 GMPPB dimers. In terms of tissue distribution, expressed in the liver (at protein level).

The protein localises to the cytoplasm. Its function is as follows. Regulatory subunit of the GMPPA-GMPPB mannose-1-phosphate guanylyltransferase complex; reduces the catalytic activity of GMPPB when part of the complex. Mediates allosteric feedback inhibition of GMPPB catalytic activity upon binding GDP-alpha-D-mannose. Together with GMPPB regulates GDP-alpha-D-mannose levels. This Sus scrofa (Pig) protein is Mannose-1-phosphate guanylyltransferase regulatory subunit alpha (GMPPA).